Reading from the N-terminus, the 94-residue chain is DNA-directed RNA polymerase subunit omega (94 aa).

It belongs to the RNA polymerase subunit omega family. The RNAP catalytic core consists of 2 alpha, 1 beta, 1 beta' and 1 omega subunit. When a sigma factor is associated with the core the holoenzyme is formed, which can initiate transcription.

It catalyses the reaction RNA(n) + a ribonucleoside 5'-triphosphate = RNA(n+1) + diphosphate. Promotes RNA polymerase assembly. Latches the N- and C-terminal regions of the beta' subunit thereby facilitating its interaction with the beta and alpha subunits. This is DNA-directed RNA polymerase subunit omega from Bifidobacterium animalis subsp. lactis (strain AD011).